An 87-amino-acid polypeptide reads, in one-letter code: Small ribosomal subunit protein bS20 (87 aa).

Residues 1-26 (MANIKSAKKRAVQSEKARKHNASRRS) are disordered.

Belongs to the bacterial ribosomal protein bS20 family.

Functionally, binds directly to 16S ribosomal RNA. In Enterobacter sp. (strain 638), this protein is Small ribosomal subunit protein bS20.